The following is a 426-amino-acid chain: Serine--tRNA ligase (426 aa).

233–235 (TAE) serves as a coordination point for L-serine. 264–266 (RSE) contacts ATP. E287 contacts L-serine. Residue 351–354 (EISS) participates in ATP binding. S387 lines the L-serine pocket.

It belongs to the class-II aminoacyl-tRNA synthetase family. Type-1 seryl-tRNA synthetase subfamily. As to quaternary structure, homodimer. The tRNA molecule binds across the dimer.

It localises to the cytoplasm. It carries out the reaction tRNA(Ser) + L-serine + ATP = L-seryl-tRNA(Ser) + AMP + diphosphate + H(+). The enzyme catalyses tRNA(Sec) + L-serine + ATP = L-seryl-tRNA(Sec) + AMP + diphosphate + H(+). It functions in the pathway aminoacyl-tRNA biosynthesis; selenocysteinyl-tRNA(Sec) biosynthesis; L-seryl-tRNA(Sec) from L-serine and tRNA(Sec): step 1/1. Functionally, catalyzes the attachment of serine to tRNA(Ser). Is also able to aminoacylate tRNA(Sec) with serine, to form the misacylated tRNA L-seryl-tRNA(Sec), which will be further converted into selenocysteinyl-tRNA(Sec). The sequence is that of Serine--tRNA ligase from Pseudomonas savastanoi pv. phaseolicola (strain 1448A / Race 6) (Pseudomonas syringae pv. phaseolicola (strain 1448A / Race 6)).